A 315-amino-acid chain; its full sequence is Methionyl-tRNA formyltransferase (315 aa).

110-113 (SLLP) contributes to the (6S)-5,6,7,8-tetrahydrofolate binding site.

It belongs to the Fmt family.

The enzyme catalyses L-methionyl-tRNA(fMet) + (6R)-10-formyltetrahydrofolate = N-formyl-L-methionyl-tRNA(fMet) + (6S)-5,6,7,8-tetrahydrofolate + H(+). Its function is as follows. Attaches a formyl group to the free amino group of methionyl-tRNA(fMet). The formyl group appears to play a dual role in the initiator identity of N-formylmethionyl-tRNA by promoting its recognition by IF2 and preventing the misappropriation of this tRNA by the elongation apparatus. In Lactobacillus delbrueckii subsp. bulgaricus (strain ATCC BAA-365 / Lb-18), this protein is Methionyl-tRNA formyltransferase.